Reading from the N-terminus, the 3649-residue chain is N-(5-amino-5-carboxypentanoyl)-L-cysteinyl-D-valine synthase (3649 aa).

The interval 401–861 (SRDRAYVTYT…LAGHLESQGH (461 aa)) is domain 1 (adipate-activating). 3 consecutive Carrier domains span residues 783–860 (APLL…ESQG), 1859–1936 (APVS…QAAA), and 2909–2984 (APRD…LSGL). S820, S1896, and S2944 each carry O-(pantetheine 4'-phosphoryl)serine. Positions 1014–1937 (HHIILDGWSL…QAEHIQAAAL (924 aa)) are domain 2 (cysteine-activating). A domain 3 (valine-activating) region spans residues 2079-2985 (HHSCFDGWSW…FVDNVLSGLA (907 aa)). The active-site For thioesterase activity is the S3502.

This sequence belongs to the ATP-dependent AMP-binding enzyme family. It depends on pantetheine 4'-phosphate as a cofactor.

It carries out the reaction L-2-aminoadipate + L-valine + L-cysteine + 3 ATP + H2O = N-[(5S)-5-amino-5-carboxypentanoyl]-L-cysteinyl-D-valine + 3 AMP + 3 diphosphate + 3 H(+). The protein operates within antibiotic biosynthesis; penicillin G biosynthesis; penicillin G from L-alpha-aminoadipate and L-cysteine and L-valine: step 1/3. Functionally, each of the constituent amino acids of the tripeptide acv are activated as aminoacyl-adenylates with peptide bonds formed through the participation of amino acid thioester intermediates. The protein is N-(5-amino-5-carboxypentanoyl)-L-cysteinyl-D-valine synthase (pcbAB) of Amycolatopsis lactamdurans (Nocardia lactamdurans).